The sequence spans 339 residues: Putative agmatine deiminase (339 aa).

The Amidino-cysteine intermediate role is filled by Cys-331.

This sequence belongs to the agmatine deiminase family.

It carries out the reaction agmatine + H2O = N-carbamoylputrescine + NH4(+). In Streptomyces coelicolor (strain ATCC BAA-471 / A3(2) / M145), this protein is Putative agmatine deiminase.